Consider the following 542-residue polypeptide: Sodium/hydrogen exchanger 8 (542 aa).

The next 11 membrane-spanning stretches (helical) occupy residues 55–75 (EQSSGMTIFFSLLVLAICIIL), 79–99 (LIRYRLHFLPESVAVVSLGIL), 118–138 (EEMFRPNMFFLLLLPPIIFES), 151–171 (IGSITLFAVFGTAISAFVVGG), 186–206 (NMTDSFAFGSLISAVDPVATI), 256–276 (TFLQALDYFLKMFFGSAALGT), 306–326 (AYLPYGLAEGISLSETCVFAF), 349–369 (LVLFGRAVNIFPLSYLLNFFR), 374–394 (TPKMMFIMWFSGLRGAIPYAL), 412–432 (TTIVIVLFTILLLGGSTMPLI), and 446–466 (NKKDVNLSKTEKMGNTVESEH). A Phosphothreonine modification is found at Thr471. Phosphoserine is present on residues Ser532 and Ser534.

Belongs to the monovalent cation:proton antiporter 1 (CPA1) transporter (TC 2.A.36) family.

It localises to the golgi apparatus membrane. The protein localises to the golgi apparatus. Its subcellular location is the trans-Golgi network membrane. It is found in the endosome. The protein resides in the multivesicular body membrane. It localises to the apical cell membrane. The protein localises to the cytoplasmic vesicle. Its subcellular location is the secretory vesicle. It is found in the acrosome. The catalysed reaction is Na(+)(in) + H(+)(out) = Na(+)(out) + H(+)(in). In terms of biological role, na(+)/H(+) antiporter. Mediates the electoneutral exchange of intracellular H(+) ions for extracellular Na(+) in 1:1 stoichiometry. Acts as an Na(+)/H(+) exchanger in the trans-Golgi. Contributes to the regulation of pH regulation of Golgi apparatus, and consequently, in protein trafficking and endosomal morphology. In germ cells, plays a crucial role in acrosome biogenesis and sperm development, probably by playing a role in the fusion of the Golgi-derived vesicles that form the acrosomal cap. Can also be active at the cell surface of specialized cells. In the small intestine, at the cell membrane, plays a major physiological role in transepithelial absorption of Na(+) and regulates intracellular pH homeostasis of intestinal epithelial cells. Acts as an important regulator of mucosal integrity in the intestine and in the stomach, could mediate the pH fluctuation necessary for mucin exocytosis or assist membrane trafficking of other proteins. Plays a role in photoreceptor survival and in the maintenance of intracellular pH homeostasis in retinal pigment epithelium (RPE cells). This Macaca fascicularis (Crab-eating macaque) protein is Sodium/hydrogen exchanger 8 (SLC9A8).